Reading from the N-terminus, the 111-residue chain is WAP four-disulfide core domain protein 12 (111 aa).

Positions 1–23 (MGSSSFLVLMVSLALVTLVVVEG) are cleaved as a signal peptide. One can recognise a WAP domain in the interval 27–74 (GIEKAGVCPADNVRCFKSNPPQCHTDQDCLGERKCCYLHCGFKCVIPV). Cystine bridges form between cysteine 34-cysteine 62, cysteine 41-cysteine 66, cysteine 49-cysteine 61, and cysteine 55-cysteine 70. The tract at residues 80 to 111 (GGNKDEDVSGPHPEPGWEAKSPGSSSTGCPQI) is disordered. Over residues 101 to 111 (PGSSSTGCPQI) the composition is skewed to polar residues.

The protein localises to the secreted. Its function is as follows. Antibacterial protein. Putative acid-stable proteinase inhibitor. The protein is WAP four-disulfide core domain protein 12 (WFDC12) of Colobus guereza (Mantled guereza).